A 172-amino-acid chain; its full sequence is Xanthine-guanine phosphoribosyltransferase (172 aa).

Residues 47–48 (RG) and 106–114 (DDLVDTGKT) contribute to the 5-phospho-alpha-D-ribose 1-diphosphate site. Asp107 lines the Mg(2+) pocket. Guanine contacts are provided by Asp110 and Ile153. Xanthine-binding residues include Asp110 and Ile153. Residues 110–114 (DTGKT) and 152–153 (WI) each bind GMP.

It belongs to the purine/pyrimidine phosphoribosyltransferase family. XGPT subfamily. Homotetramer. Mg(2+) serves as cofactor.

Its subcellular location is the cell inner membrane. The enzyme catalyses GMP + diphosphate = guanine + 5-phospho-alpha-D-ribose 1-diphosphate. It carries out the reaction XMP + diphosphate = xanthine + 5-phospho-alpha-D-ribose 1-diphosphate. It catalyses the reaction IMP + diphosphate = hypoxanthine + 5-phospho-alpha-D-ribose 1-diphosphate. It participates in purine metabolism; GMP biosynthesis via salvage pathway; GMP from guanine: step 1/1. The protein operates within purine metabolism; XMP biosynthesis via salvage pathway; XMP from xanthine: step 1/1. Its function is as follows. Purine salvage pathway enzyme that catalyzes the transfer of the ribosyl-5-phosphate group from 5-phospho-alpha-D-ribose 1-diphosphate (PRPP) to the N9 position of the 6-oxopurines guanine and xanthine to form the corresponding ribonucleotides GMP (guanosine 5'-monophosphate) and XMP (xanthosine 5'-monophosphate), with the release of PPi. To a lesser extent, also acts on hypoxanthine. In Rhodopseudomonas palustris (strain BisB5), this protein is Xanthine-guanine phosphoribosyltransferase.